The following is a 168-amino-acid chain: Cyclin-dependent kinase 4 inhibitor C (168 aa).

ANK repeat units lie at residues proline 4–alanine 33, phenylalanine 37–leucine 65, threonine 69–isoleucine 98, and glutamate 102–histidine 132.

It belongs to the CDKN2 cyclin-dependent kinase inhibitor family. Heterodimer of p18 with CDK6. Highest levels found in skeletal muscle. Also found in pancreas and heart.

Interacts strongly with CDK6, weakly with CDK4. Inhibits cell growth and proliferation with a correlated dependence on endogenous retinoblastoma protein RB. In Homo sapiens (Human), this protein is Cyclin-dependent kinase 4 inhibitor C (CDKN2C).